Consider the following 422-residue polypeptide: MLRQILSEMFIDPDLLAELSEEQKQILFYKMREEQIRRWKEREAAMERKESLPVKSRPKKENGKSVHWKLGADKQVWVWVMGEHHLDKPYDVLCDEILAEREHLRAAKDAELRKAQSLQFTNSLKVKSLNCDLQAVKKTEPQNVTRKAAAEEATDQGPRAIPTKKDDKAQTKDLTKKKDSEELKQTEDEKTKQIYKNWKEDSEWQASLRKSKAADEKRRSLAKQAREDYKRLSQRGRSGDGLQNPLTGPQKPKRPPLPPKPQFLQPLGSPPKSLGNQGVIRTKTSSTQEDIIRWFKEEQLPFRAGYQKNSDTIAPWFHGILTLKKANELLSTGMPGSFLIRVSEKIKGYALSYLSEEGCKHFLIDASANSYSFLGVDQLQHATLADLVEYHKEEPITSLGKELLLFPCGQQDKPPDYLELFQ.

Phosphoserine occurs at positions 117 and 123. 2 disordered regions span residues 141 to 190 (PQNV…EDEK) and 202 to 282 (SEWQ…VIRT). Basic and acidic residues-rich tracts occupy residues 163–190 (TKKD…EDEK) and 212–231 (KAAD…DYKR). S233 carries the phosphoserine modification. An SH2 domain is found at 316–408 (WFHGILTLKK…LGKELLLFPC (93 aa)).

In terms of assembly, interacts with ESR1.

The protein resides in the cytoplasm. Functionally, inhibits estrogen-induced cell proliferation by competing with PLCG for binding to ESR1, blocking the effect of estrogen on PLCG and repressing estrogen-induced proliferation. May play a role in T-cell development and function. The polypeptide is SH2 domain-containing protein 4A (Sh2d4a) (Rattus norvegicus (Rat)).